The chain runs to 414 residues: Lactosylceramide alpha-2,3-sialyltransferase (414 aa).

The Cytoplasmic portion of the chain corresponds to 1-65 (MHTEAVGGAA…MRRPSLLIKD (65 aa)). The helical; Signal-anchor for type II membrane protein transmembrane segment at 66 to 86 (ICKCTLVAFGVWLLYILILNY) threads the bilayer. The Lumenal portion of the chain corresponds to 87 to 414 (TAEECDMKRM…VVEDLSGGIH (328 aa)). Cysteines 194 and 352 form a disulfide. N235, N279, and N389 each carry an N-linked (GlcNAc...) asparagine glycan.

Belongs to the glycosyltransferase 29 family. In terms of tissue distribution, mainly expressed in brain, and then testis, heart and liver, almost all tissues showed some levels of the gene expression.

It is found in the golgi apparatus membrane. The catalysed reaction is a beta-D-Gal-(1-&gt;4)-beta-D-Glc-(1&lt;-&gt;1)-Cer(d18:1(4E)) + CMP-N-acetyl-beta-neuraminate = a ganglioside GM3 (d18:1(4E)) + CMP + H(+). The enzyme catalyses ganglioside GA2 (d18:1(4E)/18:0) + CMP-N-acetyl-beta-neuraminate = ganglioside GM2 (d18:1(4E)/18:0) + CMP + H(+). It catalyses the reaction a beta-D-Gal-(1&lt;-&gt;1')-ceramide + CMP-N-acetyl-beta-neuraminate = N-acetyl-alpha-neuraminosyl-(2-&gt;3)-beta-D-galactosyl-(1&lt;-&gt;1')-ceramide + CMP + H(+). It carries out the reaction ganglioside GA1 (d18:1(4E)/18:0) + CMP-N-acetyl-beta-neuraminate = ganglioside GM1 (d18:1(4E)/18:0) + CMP + H(+). Functionally, (Microbial infection) Gangliosides GD1b and GT1b (derived from GM3) may serve as receptors for some C.botulinum neurotoxins (minimally types BoNT/A, B, C). In terms of biological role, transfers the sialyl group (N-acetyl-alpha-neuraminyl or NeuAc) from CMP-NeuAc to the non-reducing terminal galactose (Gal) of glycosphingolipids forming gangliosides (important molecules involved in the regulation of multiple cellular processes, including cell proliferation and differentiation, apoptosis, embryogenesis, development, and oncogenesis). Mainly involved in the biosynthesis of ganglioside GM3 but can also use different glycolipids as substrate acceptors such as D-galactosylceramide (GalCer), asialo-GM2 (GA2) and asialo-GM1 (GA1), although less preferentially than beta-D-Gal-(1-&gt;4)-beta-D-Glc-(1&lt;-&gt;1)-Cer (LacCer). In Mus musculus (Mouse), this protein is Lactosylceramide alpha-2,3-sialyltransferase (St3gal5).